The chain runs to 84 residues: ATP synthase subunit c (84 aa).

A run of 2 helical transmembrane segments spans residues 9–29 (IIGA…GFAI) and 54–74 (IVAG…LLFI).

It belongs to the ATPase C chain family. In terms of assembly, F-type ATPases have 2 components, F(1) - the catalytic core - and F(0) - the membrane proton channel. F(1) has five subunits: alpha(3), beta(3), gamma(1), delta(1), epsilon(1). F(0) has three main subunits: a(1), b(2) and c(10-14). The alpha and beta chains form an alternating ring which encloses part of the gamma chain. F(1) is attached to F(0) by a central stalk formed by the gamma and epsilon chains, while a peripheral stalk is formed by the delta and b chains.

The protein localises to the cell inner membrane. In terms of biological role, f(1)F(0) ATP synthase produces ATP from ADP in the presence of a proton or sodium gradient. F-type ATPases consist of two structural domains, F(1) containing the extramembraneous catalytic core and F(0) containing the membrane proton channel, linked together by a central stalk and a peripheral stalk. During catalysis, ATP synthesis in the catalytic domain of F(1) is coupled via a rotary mechanism of the central stalk subunits to proton translocation. Functionally, key component of the F(0) channel; it plays a direct role in translocation across the membrane. A homomeric c-ring of between 10-14 subunits forms the central stalk rotor element with the F(1) delta and epsilon subunits. The protein is ATP synthase subunit c of Haemophilus ducreyi (strain 35000HP / ATCC 700724).